The following is a 388-amino-acid chain: MVEADRPGKLFIGGLNTETNEKALEAVFGKYGRIVEILLMKDRETNKSRGFAFVTFESPADAKDVARDMNGKSLDGKAIKVEQATKPSFESGRRGPPPPPRSRGPPRGLRGGSGGTRGPPSRGGYMDDGGYSMNFNMSSSRGPLPVKRGPPPRSGGPPPKRSTPSGPVRSSSGMGGRMPVSRGRDSYGGPPRREPLPSRRDVYLSPRDDGYSTKDSYSSRDYLSSRDTRDYAPPPRDYTYRDYSHSSSRDDYPSRGYGDRDGYGRDREYSDHPSGGSYRDSYESYGNSCSAPPTRGPPPSYGGSSRYDDYSSSRDGYGGSRDSYSSSRSDLYSSDRDRVGRQERGLPPSMERGYPPPRDFYSSSSRGAPRGGGRGGSRSDRGGGQKQI.

The region spanning 8–86 (GKLFIGGLNT…KAIKVEQATK (79 aa)) is the RRM domain. The span at 61–80 (DAKDVARDMNGKSLDGKAIK) shows a compositional bias: basic and acidic residues. The tract at residues 61–388 (DAKDVARDMN…SDRGGGQKQI (328 aa)) is disordered. K80 participates in a covalent cross-link: Glycyl lysine isopeptide (Lys-Gly) (interchain with G-Cter in SUMO2). Position 88 is a phosphoserine (S88). The segment covering 148–161 (RGPPPRSGGPPPKR) has biased composition (pro residues). Basic and acidic residues-rich tracts occupy residues 191 to 212 (PRREPLPSRRDVYLSPRDDGYS) and 238 to 271 (YTYRDYSHSSSRDDYPSRGYGDRDGYGRDREYSD). Positions 320–332 (SRDSYSSSRSDLY) are enriched in low complexity. 2 stretches are compositionally biased toward basic and acidic residues: residues 333-344 (SSDRDRVGRQER) and 377-388 (SRSDRGGGQKQI).

It is found in the nucleus. RNA-binding protein which may be involved in pre-mRNA splicing. The chain is RNA binding motif protein, X-linked-like-1 (Rbmxl1) from Rattus norvegicus (Rat).